Reading from the N-terminus, the 237-residue chain is MERVWVVIPAGGRGQRFGAAQAKQYVLLRDRPVIAHTLAAFLGEPRIAGIQLVLPGEDIATGAWRELLGPMPAPLLPPVVGGGLRADSVRLGLEALLRQGAVPSDWVLVHDAARPCLRREDLLRLLESLANAPQGALLAVPVADTLKRGEDGCSSGTVDREGLWRALTPQAFPLGALLAALEAARAGNRQITDEASAMEAQGWRPRLIPGHGDNIKVTLSDDLMLAAAILAARSEEG.

Belongs to the IspD/TarI cytidylyltransferase family. IspD subfamily.

The enzyme catalyses 2-C-methyl-D-erythritol 4-phosphate + CTP + H(+) = 4-CDP-2-C-methyl-D-erythritol + diphosphate. Its pathway is isoprenoid biosynthesis; isopentenyl diphosphate biosynthesis via DXP pathway; isopentenyl diphosphate from 1-deoxy-D-xylulose 5-phosphate: step 2/6. In terms of biological role, catalyzes the formation of 4-diphosphocytidyl-2-C-methyl-D-erythritol from CTP and 2-C-methyl-D-erythritol 4-phosphate (MEP). This is 2-C-methyl-D-erythritol 4-phosphate cytidylyltransferase from Acidithiobacillus ferrooxidans (strain ATCC 23270 / DSM 14882 / CIP 104768 / NCIMB 8455) (Ferrobacillus ferrooxidans (strain ATCC 23270)).